We begin with the raw amino-acid sequence, 370 residues long: MDGLHPASWMLLLGSLAFWSASSLLLFSLALPGARASNQLLSECHNGKGKGINCSELTVRESEVRVCDESSCKYGGVCKEEGDVLKCICQFQCQTNYAPVCGSNGDTYQNECFLRRSACKQQKDITVVARGPCFSDIASGSGEGEYEGSGGEVHKKHSKCGVCKFGAECDEDAGDVGCVCNIDCSGHNFNPVCATDGSSYSNPCLVREASCLRQEQIDVKHIRSCIETDETSIMGKKDEGLQNRPEVKDSTDQREGDFMGNYIPCSENYNGYCVHGKCELSYSSQKASCRCDSGYTGQYCDKTDFNILYVVPSRQKLTHVLIAAIIGAVQIAIIVAIVMCITRKCPKNNRGRRQKQNLGHFSSDTSSRMV.

A signal peptide spans Met1–Ala36. Topologically, residues Ser37–Val320 are extracellular. N-linked (GlcNAc...) asparagine glycosylation is present at Asn53. Kazal-like domains are found at residues Ile88–Ser135 and Val179–Glu227. Cystine bridges form between Cys89/Cys119, Cys93/Cys112, Cys101/Cys133, Cys180/Cys211, Cys184/Cys204, Cys193/Cys225, Cys265/Cys278, Cys273/Cys289, and Cys291/Cys300. The EGF-like domain maps to Asn261–Asp301. The helical transmembrane segment at Leu321–Ile341 threads the bilayer. The Cytoplasmic segment spans residues Thr342–Val370. A disordered region spans residues Asn349–Val370. Positions Gln356 to Val370 are enriched in polar residues.

It belongs to the tomoregulin family. In terms of assembly, interacts with cripto. Expressed at highest levels in brain, and at lower levels in neuroendocrine tissues. Present in neurons from the diencephalon (at protein level).

The protein resides in the cell membrane. Inhibits nodal/nr-1 and bmp signaling during neural patterning through interaction with cripto. This is Tomoregulin-1 (tmeff1) from Xenopus laevis (African clawed frog).